The chain runs to 597 residues: Glypican-3 (597 aa).

The N-terminal stretch at 1–24 (MAGTVRTACLLVAMLLGLGCLGQA) is a signal peptide. Gln-25 is modified (pyrrolidone carboxylic acid). 7 disulfide bridges follow: Cys-34–Cys-71, Cys-64–Cys-261, Cys-72–Cys-264, Cys-196–Cys-348, Cys-251–Cys-284, Cys-273–Cys-421, and Cys-277–Cys-409. 2 N-linked (GlcNAc...) asparagine glycosylation sites follow: Asn-123 and Asn-240. Phosphoserine is present on Ser-351. Asn-417 carries N-linked (GlcNAc...) asparagine glycosylation. 2 O-linked (Xyl...) (glycosaminoglycan) serine glycosylation sites follow: Ser-494 and Ser-508. A disordered region spans residues 533–553 (DAPGNKQHGNQKDNEITTSHS).

Belongs to the glypican family. As to quaternary structure, heterodimer; disulfide-linked. Cleavage by a furin-like convertase results in production of alpha and beta chains which form a disulfide-linked heterodimer. Interacts with DPP4. Interacts with FGF2. Interacts with WNT5A. Also interacts with WNT3A and WNT7B. Interacts with hedgehog protein SHH; the heparan sulfate chains are not required for the interaction. Also interacts with hedgehog protein IHH. Interacts with CD81. Interacts with Wnt receptors FZD4, FZD7 and FZD8; the heparan sulfate chains are required for the interaction. O-glycosylated; contains heparan sulfate and/or chondroitin sulfate. In terms of processing, cleaved intracellularly by a furin-like convertase to generate 2 subunits, alpha and beta, which remain associated through disulfide bonds and are associated with the cell surface via the GPI-anchor. This processing is essential for its role in inhibition of hedgehog signaling. A second proteolytic event may result in cleavage of the protein on the cell surface, separating it from the GPI-anchor and leading to its shedding from the cell surface.

It is found in the cell membrane. Functionally, cell surface proteoglycan. Negatively regulates the hedgehog signaling pathway when attached via the GPI-anchor to the cell surface by competing with the hedgehog receptor PTC1 for binding to hedgehog proteins. Binding to the hedgehog protein SHH triggers internalization of the complex by endocytosis and its subsequent lysosomal degradation. Positively regulates the canonical Wnt signaling pathway by binding to the Wnt receptor Frizzled and stimulating the binding of the Frizzled receptor to Wnt ligands. Positively regulates the non-canonical Wnt signaling pathway. Binds to CD81 which decreases the availability of free CD81 for binding to the transcriptional repressor HHEX, resulting in nuclear translocation of HHEX and transcriptional repression. Inhibits the dipeptidyl peptidase activity of DPP4. Plays a role in limb patterning and skeletal development by controlling the cellular response to BMP4. Modulates the effects of growth factors BMP2, BMP7 and FGF7 on renal branching morphogenesis. Required for coronary vascular development. Plays a role in regulating cell movements during gastrulation. In Rattus norvegicus (Rat), this protein is Glypican-3 (Gpc3).